The primary structure comprises 795 residues: MKRLRTPSSSDSSDNESPSTSFSSNKYGSKPGTPASAQKKPAEVFRKDLISAMKLPDSHHISSEDYYLLADTWKQEWEKGVQVLASPDTIPQPSVRIITEKPKEVLFSKPRKYIQCWSQDSTETGYVNIKELAEAMCRYDLDDMDLYWLQQLNAELGMMGDGVVDELTMERVMEALERQCHENMNHAIETEEGLGIEYDEDVICDVCRSPDSEEGNDMVFCDKCNICVHQACYGIVKVPDGNWLCRTCVLGITPQCLLCPKTGGAMKATRAGTKWAHVSCALWIPEVSIACPERMEPITKVSHIPPSRWSLICSLCKLKTGACIQCSVKNCTIPFHVTCAFEHSLEMKTILDEGDEVKFKSYCLKHSKPKAGEPGLSPARHKPPTETDKLSLRAQKLQELEEEFYTYVHPEEVAHDLSLPLHLLDFIFQYWKMKRKSNFNKALLPPKEDEENLLLQPQEDSIHTRMRMFMHLRQDLERVRNLCYMVSRREKLKLSQSKAQEQIFNLHVKLVNQELSAGLPVSSSIENLLFHPPPRITLKLKMPKVQLGNGKSSSKSGNGPLCPDNSCNLYDTSEGGIGQGKPQLHLGRQRIEERINGILPASIYIRRDGGTPPLAVKQSGKPLALHAALHGQSSNGKTKNEAEKSRQIKSNGILDKPILQRDTSCLAASEKDPRSEISGKSQSSGFHKTSLEHFSRSLKEATVSLVRTEDLRTFEKNSRKSSGFSKPLSTERPQGGGRASQESDGYCPDAELSDSEPEAKGKCRQGGRTQNQRGDYVKSASRAKHSYGSRTSVQR.

Low complexity predominate over residues 1-25; sequence MKRLRTPSSSDSSDNESPSTSFSSN. The tract at residues 1-41 is disordered; sequence MKRLRTPSSSDSSDNESPSTSFSSNKYGSKPGTPASAQKKP. Residues 201 to 251 form a PHD-type 1 zinc finger; it reads DVICDVCRSPDSEEGNDMVFCDKCNICVHQACYGIVKVPDGNWLCRTCVLG. The segment at 253–287 adopts a C2HC pre-PHD-type zinc-finger fold; it reads TPQCLLCPKTGGAMKATRAGTKWAHVSCALWIPEV. The PHD-type 2 zinc finger occupies 311 to 367; that stretch reads LICSLCKLKTGACIQCSVKNCTIPFHVTCAFEHSLEMKTILDEGDEVKFKSYCLKHS. Disordered regions lie at residues 630–654, 667–687, and 714–795; these read HGQS…NGIL, AASE…SGFH, and FEKN…SVQR. Composition is skewed to polar residues over residues 678–687 and 720–732; these read SGKSQSSGFH and KSSG…STER.

It belongs to the JADE family. In terms of assembly, component of the HBO1 complex.

Functionally, scaffold subunit of some HBO1 complexes, which have a histone H4 acetyltransferase activity. This Danio rerio (Zebrafish) protein is Protein Jade-3 (jade3).